Here is a 742-residue protein sequence, read N- to C-terminus: NAD(P)H-quinone oxidoreductase subunit 5, chloroplastic (742 aa).

A run of 16 helical transmembrane segments spans residues 9–29 (WIIP…LLLF), 40–60 (WSFQ…NLSI), 89–109 (IDPL…MVLI), 125–145 (FAYM…SNLI), 147–167 (IYIF…FWFT), 185–205 (GDFG…SFEF), 219–239 (NEVN…GAIA), 258–278 (TPIS…FLVA), 283–303 (LFIV…ITVF), 327–347 (LGYM…FHLI), 354–374 (ALLF…VGYC), 396–416 (NSFL…CFWS), 425–445 (WLYS…TAFY), 550–570 (LFPI…GIPF), 606–626 (FFSV…YKPV), and 722–742 (YLFF…FFNV).

It belongs to the complex I subunit 5 family. As to quaternary structure, NDH is composed of at least 16 different subunits, 5 of which are encoded in the nucleus.

It is found in the plastid. The protein localises to the chloroplast thylakoid membrane. The enzyme catalyses a plastoquinone + NADH + (n+1) H(+)(in) = a plastoquinol + NAD(+) + n H(+)(out). It catalyses the reaction a plastoquinone + NADPH + (n+1) H(+)(in) = a plastoquinol + NADP(+) + n H(+)(out). Functionally, NDH shuttles electrons from NAD(P)H:plastoquinone, via FMN and iron-sulfur (Fe-S) centers, to quinones in the photosynthetic chain and possibly in a chloroplast respiratory chain. The immediate electron acceptor for the enzyme in this species is believed to be plastoquinone. Couples the redox reaction to proton translocation, and thus conserves the redox energy in a proton gradient. This chain is NAD(P)H-quinone oxidoreductase subunit 5, chloroplastic (ndhF), found in Lactuca sativa (Garden lettuce).